The sequence spans 360 residues: Geranylgeranyl pyrophosphate synthase 9, chloroplastic (360 aa).

Residues 1-39 (MATTVHLSSSSLFSQSRGRRDNSISSVKSLRKRTVLSLS) constitute a chloroplast transit peptide. The isopentenyl diphosphate site is built by K106, R109, and H138. 2 residues coordinate Mg(2+): D145 and D151. A dimethylallyl diphosphate-binding site is contributed by R156. R157 is an isopentenyl diphosphate binding site. The dimethylallyl diphosphate site is built by K245, T246, Q283, K300, and K310.

The protein belongs to the FPP/GGPP synthase family. Monomer. No interactions with GGR. The cofactor is Mg(2+).

It localises to the plastid. Its subcellular location is the chloroplast. The catalysed reaction is isopentenyl diphosphate + dimethylallyl diphosphate = (2E)-geranyl diphosphate + diphosphate. It catalyses the reaction isopentenyl diphosphate + (2E)-geranyl diphosphate = (2E,6E)-farnesyl diphosphate + diphosphate. The enzyme catalyses isopentenyl diphosphate + (2E,6E)-farnesyl diphosphate = (2E,6E,10E)-geranylgeranyl diphosphate + diphosphate. The protein operates within isoprenoid biosynthesis; farnesyl diphosphate biosynthesis; farnesyl diphosphate from geranyl diphosphate and isopentenyl diphosphate: step 1/1. It functions in the pathway isoprenoid biosynthesis; geranyl diphosphate biosynthesis; geranyl diphosphate from dimethylallyl diphosphate and isopentenyl diphosphate: step 1/1. Its pathway is isoprenoid biosynthesis; geranylgeranyl diphosphate biosynthesis; geranylgeranyl diphosphate from farnesyl diphosphate and isopentenyl diphosphate: step 1/1. Catalyzes the trans-addition of the three molecules of IPP onto DMAPP to form geranylgeranyl pyrophosphate. In Arabidopsis thaliana (Mouse-ear cress), this protein is Geranylgeranyl pyrophosphate synthase 9, chloroplastic (GGPPS9).